Consider the following 344-residue polypeptide: tRNA N6-adenosine threonylcarbamoyltransferase (344 aa).

Fe cation contacts are provided by His-112 and His-116. Substrate is bound by residues 134–138 (LASGG), Asp-167, Gly-180, and Asn-280. Asp-308 contributes to the Fe cation binding site.

It belongs to the KAE1 / TsaD family. Fe(2+) serves as cofactor.

It localises to the cytoplasm. It catalyses the reaction L-threonylcarbamoyladenylate + adenosine(37) in tRNA = N(6)-L-threonylcarbamoyladenosine(37) in tRNA + AMP + H(+). Its function is as follows. Required for the formation of a threonylcarbamoyl group on adenosine at position 37 (t(6)A37) in tRNAs that read codons beginning with adenine. Is involved in the transfer of the threonylcarbamoyl moiety of threonylcarbamoyl-AMP (TC-AMP) to the N6 group of A37, together with TsaE and TsaB. TsaD likely plays a direct catalytic role in this reaction. The sequence is that of tRNA N6-adenosine threonylcarbamoyltransferase from Rickettsia massiliae (strain Mtu5).